Consider the following 536-residue polypeptide: Putative UDP-glucuronosyltransferase ugt-47 (536 aa).

The first 21 residues, 1–21 (MMLQTSTILQLLLFLVGSVSA), serve as a signal peptide directing secretion. 2 N-linked (GlcNAc...) asparagine glycosylation sites follow: N52 and N308. Residues 497–517 (IIVPVLFVLLYCLIIPFFKLI) form a helical membrane-spanning segment.

This sequence belongs to the UDP-glycosyltransferase family.

The protein localises to the membrane. The enzyme catalyses glucuronate acceptor + UDP-alpha-D-glucuronate = acceptor beta-D-glucuronoside + UDP + H(+). The polypeptide is Putative UDP-glucuronosyltransferase ugt-47 (ugt-47) (Caenorhabditis briggsae).